The chain runs to 495 residues: Transcription termination/antitermination protein NusA (495 aa).

Residues 135–200 form the S1 motif domain; that stretch reads GKIVTGTVKK…KTAQLFVTRS (66 aa). The KH domain maps to 302–374; it reads NHSMDIAVEA…LDEEFAQILV (73 aa).

It belongs to the NusA family. As to quaternary structure, monomer. Binds directly to the core enzyme of the DNA-dependent RNA polymerase and to nascent RNA.

It is found in the cytoplasm. In terms of biological role, participates in both transcription termination and antitermination. In Haemophilus influenzae (strain ATCC 51907 / DSM 11121 / KW20 / Rd), this protein is Transcription termination/antitermination protein NusA.